The primary structure comprises 77 residues: Secapin (77 aa).

A signal peptide spans 1-32 (MKNYSKNATYLITVLLFSFVAMLLIIPSKCEA). The propeptide occupies 33–52 (VSNDMQPLEARSADLVPEPR). A disulfide bond links C61 and C72.

This sequence belongs to the secapin family. In terms of tissue distribution, expressed by the venom gland.

It localises to the secreted. Nontoxic peptide. This chain is Secapin, found in Vespa magnifica (Hornet).